The following is a 529-amino-acid chain: Peptide chain release factor 3 (529 aa).

The region spanning 11-280 (AKRRTFAIIS…GLVEWAPAPM (270 aa)) is the tr-type G domain. GTP-binding positions include 20–27 (SHPDAGKT), 88–92 (DTPGH), and 142–145 (NKLD).

The protein belongs to the TRAFAC class translation factor GTPase superfamily. Classic translation factor GTPase family. PrfC subfamily.

The protein localises to the cytoplasm. Functionally, increases the formation of ribosomal termination complexes and stimulates activities of RF-1 and RF-2. It binds guanine nucleotides and has strong preference for UGA stop codons. It may interact directly with the ribosome. The stimulation of RF-1 and RF-2 is significantly reduced by GTP and GDP, but not by GMP. The polypeptide is Peptide chain release factor 3 (Escherichia coli O8 (strain IAI1)).